A 100-amino-acid chain; its full sequence is RING finger protein Z (100 aa).

Residue glycine 2 is the site of N-myristoyl glycine; by host attachment. An RING-type; atypical zinc finger spans residues 43–79 (CRCCWFANTNLIKCSDHYICLKCLNIMLGKSSFCDIC). A PTAP/PSAP motif motif is present at residues 93 to 96 (PSAP).

The protein belongs to the arenaviridae Z protein family. As to quaternary structure, interacts with protein NP; this interaction probably directs the encapsidated genome to budding sites. Interacts (via RING domain) with polymerase L; this interaction inhibits viral transcription and replication, Z partially blocks the product exit tunnel for the releasing nascent RNA product. Interacts with the glycoprotein complex; this interaction plays a role in virion budding. Interacts with host eIF4E; this interaction results in eIF4E reduced affinity for its substrate, the 5'-m7 G cap structure. Interacts (via late-budding domain) with host TSG101; this interaction is essential for budding and release of viral particles. Interacts with host RPLP0; this interaction may serve to load ribosome-like particles inside the virion. Interacts with host PML; this interaction induces PML bodies redistribution in the cytoplasm upon viral infection. Myristoylation is required for the role of RING finger protein Z in assembly and budding.

It is found in the virion. The protein resides in the host cytoplasm. Its subcellular location is the host perinuclear region. The protein localises to the host cell membrane. Its function is as follows. Plays a crucial role in virion assembly and budding. Expressed late in the virus life cycle, it acts as an inhibitor of viral transcription and RNA synthesis by interacting with the viral polymerase L. Presumably recruits the NP encapsidated genome to cellular membranes at budding sites via direct interaction with NP. Plays critical roles in the final steps of viral release by interacting with host TSG101, a member of the vacuolar protein-sorting pathway and using other cellular host proteins involved in vesicle formation pathway. The budding of the virus progeny occurs after association of protein Z with the viral glycoprotein complex SSP-GP1-GP2 at the cell periphery, step that requires myristoylation of protein Z. Also selectively represses protein production by associating with host eIF4E. In cell-based minigenome assay, has an inhibitory effect on the ribonucleoprotein machinery (vRNP), which is responsible for the replication and transcription of the viral genome. The chain is RING finger protein Z from Homo sapiens (Human).